We begin with the raw amino-acid sequence, 107 residues long: Polyketide synthase CurG (107 aa).

The protein operates within antibiotic biosynthesis; curamycin biosynthesis. The polypeptide is Polyketide synthase CurG (curG) (Streptomyces cyaneus (Streptomyces curacoi)).